Reading from the N-terminus, the 464-residue chain is Cysteine--tRNA ligase (464 aa).

Cysteine 32 serves as a coordination point for Zn(2+). The 'HIGH' region motif lies at 34–44 (VTVYDDCHIGH). Residues cysteine 213, histidine 238, and glutamate 242 each coordinate Zn(2+). A 'KMSKS' region motif is present at residues 270–274 (KMSKS). Residue lysine 273 coordinates ATP.

This sequence belongs to the class-I aminoacyl-tRNA synthetase family. Monomer. The cofactor is Zn(2+).

The protein resides in the cytoplasm. It carries out the reaction tRNA(Cys) + L-cysteine + ATP = L-cysteinyl-tRNA(Cys) + AMP + diphosphate. In Francisella tularensis subsp. tularensis (strain SCHU S4 / Schu 4), this protein is Cysteine--tRNA ligase.